The sequence spans 451 residues: Tol-Pal system protein TolB 1 (451 aa).

A signal peptide spans 1 to 19 (MTLRMLFAFALLAAAPAQA). The segment covering 18-29 (QAQQTEPQPAEE) has biased composition (low complexity). Disordered regions lie at residues 18–37 (QAQQTEPQPAEEGGLSGTVS) and 431–451 (NERRLSTPGDASDPAWGPLLP).

This sequence belongs to the TolB family. In terms of assembly, the Tol-Pal system is composed of five core proteins: the inner membrane proteins TolA, TolQ and TolR, the periplasmic protein TolB and the outer membrane protein Pal. They form a network linking the inner and outer membranes and the peptidoglycan layer.

The protein resides in the periplasm. In terms of biological role, part of the Tol-Pal system, which plays a role in outer membrane invagination during cell division and is important for maintaining outer membrane integrity. The polypeptide is Tol-Pal system protein TolB 1 (Novosphingobium aromaticivorans (strain ATCC 700278 / DSM 12444 / CCUG 56034 / CIP 105152 / NBRC 16084 / F199)).